Here is a 208-residue protein sequence, read N- to C-terminus: Outer-membrane lipoprotein LolB (208 aa).

Residues 1 to 17 (MIRRLLGVALLTGAITG) form the signal peptide. Cysteine 18 carries N-palmitoyl cysteine lipidation. Cysteine 18 carries the S-diacylglycerol cysteine lipid modification.

The protein belongs to the LolB family. In terms of assembly, monomer.

It localises to the cell outer membrane. In terms of biological role, plays a critical role in the incorporation of lipoproteins in the outer membrane after they are released by the LolA protein. The polypeptide is Outer-membrane lipoprotein LolB (Marinobacter nauticus (strain ATCC 700491 / DSM 11845 / VT8) (Marinobacter aquaeolei)).